Here is a 90-residue protein sequence, read N- to C-terminus: Acylphosphatase (90 aa).

Positions 3–90 (QYRIIVDGRV…DGFQKFNISY (88 aa)) constitute an Acylphosphatase-like domain. Active-site residues include arginine 18 and asparagine 36.

This sequence belongs to the acylphosphatase family.

The catalysed reaction is an acyl phosphate + H2O = a carboxylate + phosphate + H(+). The sequence is that of Acylphosphatase (acyP) from Bacillus licheniformis (strain ATCC 14580 / DSM 13 / JCM 2505 / CCUG 7422 / NBRC 12200 / NCIMB 9375 / NCTC 10341 / NRRL NRS-1264 / Gibson 46).